Here is a 163-residue protein sequence, read N- to C-terminus: ADP-ribosylation factor-like protein 2-binding protein (163 aa).

It belongs to the ARL2BP family. Interacts with GTP bound ARL2 and ARL3; the complex ARL2-ARL2BP as well as ARL2BP alone, binds to SLC25A4/ANT1. Interaction with ARL2 may be required for targeting to cilia basal body. Interacts with STAT3; interaction is enhanced with ARL2. Found in a complex with ARL2, ARL2BP and SLC25A4. Interacts with STAT2, STAT3 and STAT4. Found in a complex with ARL2BP, ARL2 and SLC25A6. As to expression, expressed in brain.

It localises to the cytoplasm. Its subcellular location is the mitochondrion intermembrane space. It is found in the cytoskeleton. The protein localises to the microtubule organizing center. The protein resides in the centrosome. It localises to the nucleus. Its subcellular location is the spindle. It is found in the cilium basal body. In terms of biological role, together with ARL2, plays a role in the nuclear translocation, retention and transcriptional activity of STAT3. May play a role as an effector of ARL2. The protein is ADP-ribosylation factor-like protein 2-binding protein (ARL2BP) of Bos taurus (Bovine).